Reading from the N-terminus, the 650-residue chain is Acetyl-coenzyme A synthetase (650 aa).

Residues 191 to 194 (RGGR), threonine 311, and asparagine 335 contribute to the CoA site. ATP contacts are provided by residues 387–389 (GEP), 411–416 (DTWWQT), aspartate 501, and arginine 516. Serine 524 contacts CoA. Arginine 527 lines the ATP pocket. Residues valine 538, histidine 540, and isoleucine 543 each coordinate Mg(2+). Residue arginine 585 coordinates CoA. Lysine 610 bears the N6-acetyllysine mark.

It belongs to the ATP-dependent AMP-binding enzyme family. It depends on Mg(2+) as a cofactor. Post-translationally, acetylated. Deacetylation by the SIR2-homolog deacetylase activates the enzyme.

It carries out the reaction acetate + ATP + CoA = acetyl-CoA + AMP + diphosphate. Functionally, catalyzes the conversion of acetate into acetyl-CoA (AcCoA), an essential intermediate at the junction of anabolic and catabolic pathways. AcsA undergoes a two-step reaction. In the first half reaction, AcsA combines acetate with ATP to form acetyl-adenylate (AcAMP) intermediate. In the second half reaction, it can then transfer the acetyl group from AcAMP to the sulfhydryl group of CoA, forming the product AcCoA. In Vibrio parahaemolyticus serotype O3:K6 (strain RIMD 2210633), this protein is Acetyl-coenzyme A synthetase.